Consider the following 552-residue polypeptide: Probable protein kinase UbiB (552 aa).

The region spanning 121–504 is the Protein kinase domain; that stretch reads HFDTVPLASA…QGLQRRVVNA (384 aa). ATP-binding positions include 127–135 and lysine 149; that span reads LASASISQV. Aspartate 284 (proton acceptor) is an active-site residue. 2 helical membrane passes run 501-521 and 530-550; these read VVNA…YGLH and IPVW…SAWW.

The protein belongs to the ABC1 family. UbiB subfamily.

The protein resides in the cell inner membrane. Its pathway is cofactor biosynthesis; ubiquinone biosynthesis [regulation]. In terms of biological role, is probably a protein kinase regulator of UbiI activity which is involved in aerobic coenzyme Q (ubiquinone) biosynthesis. In Xylella fastidiosa (strain M23), this protein is Probable protein kinase UbiB.